A 470-amino-acid polypeptide reads, in one-letter code: 3-isopropylmalate dehydratase large subunit (470 aa).

Positions 294–307 (PDQNTGISGSTPNP) are enriched in polar residues. Residues 294 to 313 (PDQNTGISGSTPNPSDAADD) are disordered. [4Fe-4S] cluster-binding residues include cysteine 347, cysteine 407, and cysteine 410.

It belongs to the aconitase/IPM isomerase family. LeuC type 1 subfamily. Heterodimer of LeuC and LeuD. The cofactor is [4Fe-4S] cluster.

The catalysed reaction is (2R,3S)-3-isopropylmalate = (2S)-2-isopropylmalate. It functions in the pathway amino-acid biosynthesis; L-leucine biosynthesis; L-leucine from 3-methyl-2-oxobutanoate: step 2/4. Catalyzes the isomerization between 2-isopropylmalate and 3-isopropylmalate, via the formation of 2-isopropylmaleate. The sequence is that of 3-isopropylmalate dehydratase large subunit from Akkermansia muciniphila (strain ATCC BAA-835 / DSM 22959 / JCM 33894 / BCRC 81048 / CCUG 64013 / CIP 107961 / Muc).